Consider the following 451-residue polypeptide: UDP-N-acetylmuramate--L-alanine ligase (451 aa).

An ATP-binding site is contributed by 110 to 116 (GTHGKTT).

The protein belongs to the MurCDEF family.

Its subcellular location is the cytoplasm. The enzyme catalyses UDP-N-acetyl-alpha-D-muramate + L-alanine + ATP = UDP-N-acetyl-alpha-D-muramoyl-L-alanine + ADP + phosphate + H(+). It functions in the pathway cell wall biogenesis; peptidoglycan biosynthesis. Its function is as follows. Cell wall formation. This Francisella tularensis subsp. mediasiatica (strain FSC147) protein is UDP-N-acetylmuramate--L-alanine ligase.